The following is a 421-amino-acid chain: 3-isopropylmalate dehydratase large subunit (421 aa).

Residues Cys-300, Cys-360, and Cys-363 each coordinate [4Fe-4S] cluster.

Belongs to the aconitase/IPM isomerase family. LeuC type 2 subfamily. As to quaternary structure, heterodimer of LeuC and LeuD. It depends on [4Fe-4S] cluster as a cofactor.

It carries out the reaction (2R,3S)-3-isopropylmalate = (2S)-2-isopropylmalate. It functions in the pathway amino-acid biosynthesis; L-leucine biosynthesis; L-leucine from 3-methyl-2-oxobutanoate: step 2/4. Catalyzes the isomerization between 2-isopropylmalate and 3-isopropylmalate, via the formation of 2-isopropylmaleate. This is 3-isopropylmalate dehydratase large subunit from Thermodesulfovibrio yellowstonii (strain ATCC 51303 / DSM 11347 / YP87).